The primary structure comprises 410 residues: Arginine biosynthesis bifunctional protein ArgJ (410 aa).

Residues threonine 158, lysine 184, threonine 195, glutamate 282, asparagine 405, and threonine 410 each contribute to the substrate site. Catalysis depends on threonine 195, which acts as the Nucleophile.

It belongs to the ArgJ family. In terms of assembly, heterotetramer of two alpha and two beta chains.

It localises to the cytoplasm. The catalysed reaction is N(2)-acetyl-L-ornithine + L-glutamate = N-acetyl-L-glutamate + L-ornithine. It carries out the reaction L-glutamate + acetyl-CoA = N-acetyl-L-glutamate + CoA + H(+). The protein operates within amino-acid biosynthesis; L-arginine biosynthesis; L-ornithine and N-acetyl-L-glutamate from L-glutamate and N(2)-acetyl-L-ornithine (cyclic): step 1/1. It functions in the pathway amino-acid biosynthesis; L-arginine biosynthesis; N(2)-acetyl-L-ornithine from L-glutamate: step 1/4. Its function is as follows. Catalyzes two activities which are involved in the cyclic version of arginine biosynthesis: the synthesis of N-acetylglutamate from glutamate and acetyl-CoA as the acetyl donor, and of ornithine by transacetylation between N(2)-acetylornithine and glutamate. The protein is Arginine biosynthesis bifunctional protein ArgJ of Rhodopirellula baltica (strain DSM 10527 / NCIMB 13988 / SH1).